The primary structure comprises 361 residues: Eukaryotic translation initiation factor 3 subunit F (361 aa).

A disordered region spans residues 1-86; the sequence is MATPAVPVSA…PAPALPGPAL (86 aa). The residue at position 2 (alanine 2) is an N-acetylalanine. Pro residues-rich tracts occupy residues 9–20 and 30–40; these read SAPPATPAPVPA and VPAPTPAPAAA. The segment covering 41–78 has biased composition (low complexity); the sequence is PVPAAAPASSSDPAAAAATTAAPGQTPASAQAPAQTPA. Serine 50 is modified (phosphoserine; by CDK11; in vitro). Residues 96–226 enclose the MPN domain; the sequence is VRLHPVILAS…IKAYVSTLMG (131 aa). N6-acetyllysine is present on lysine 242. Phosphoserine is present on serine 262.

The protein belongs to the eIF-3 subunit F family. As to quaternary structure, component of the eukaryotic translation initiation factor 3 (eIF-3) complex, which is composed of 13 subunits: EIF3A, EIF3B, EIF3C, EIF3D, EIF3E, EIF3F, EIF3G, EIF3H, EIF3I, EIF3J, EIF3K, EIF3L and EIF3M. The eIF-3 complex appears to include 3 stable modules: module A is composed of EIF3A, EIF3B, EIF3G and EIF3I; module B is composed of EIF3F, EIF3H, and EIF3M; and module C is composed of EIF3C, EIF3D, EIF3E, EIF3K and EIF3L. EIF3C of module C binds EIF3B of module A and EIF3H of module B, thereby linking the three modules. EIF3J is a labile subunit that binds to the eIF-3 complex via EIF3B. The eIF-3 complex interacts with RPS6KB1 under conditions of nutrient depletion. Mitogenic stimulation leads to binding and activation of a complex composed of MTOR and RPTOR, leading to phosphorylation and release of RPS6KB1 and binding of EIF4B to eIF-3. Interacts with RNF139; the interaction leads to protein translation inhibitions in a ubiquitination-dependent manner. Interacts with DTX1, the interaction is required for deubiquitinating activity towards NOTCH1. In terms of processing, phosphorylation is enhanced upon serum stimulation. Phosphorylated during apoptosis by caspase-processed CDK11.

It is found in the cytoplasm. It carries out the reaction Thiol-dependent hydrolysis of ester, thioester, amide, peptide and isopeptide bonds formed by the C-terminal Gly of ubiquitin (a 76-residue protein attached to proteins as an intracellular targeting signal).. Its function is as follows. Component of the eukaryotic translation initiation factor 3 (eIF-3) complex, which is required for several steps in the initiation of protein synthesis. The eIF-3 complex associates with the 40S ribosome and facilitates the recruitment of eIF-1, eIF-1A, eIF-2:GTP:methionyl-tRNAi and eIF-5 to form the 43S pre-initiation complex (43S PIC). The eIF-3 complex stimulates mRNA recruitment to the 43S PIC and scanning of the mRNA for AUG recognition. The eIF-3 complex is also required for disassembly and recycling of post-termination ribosomal complexes and subsequently prevents premature joining of the 40S and 60S ribosomal subunits prior to initiation. The eIF-3 complex specifically targets and initiates translation of a subset of mRNAs involved in cell proliferation, including cell cycling, differentiation and apoptosis, and uses different modes of RNA stem-loop binding to exert either translational activation or repression. Deubiquitinates activated NOTCH1, promoting its nuclear import, thereby acting as a positive regulator of Notch signaling. The sequence is that of Eukaryotic translation initiation factor 3 subunit F from Pan troglodytes (Chimpanzee).